The chain runs to 351 residues: Dihydroorotate dehydrogenase (quinone) (351 aa).

FMN is bound by residues 67 to 71 (AGFDK) and Thr-91. Lys-71 lines the substrate pocket. 116-120 (NAMGF) is a substrate binding site. Positions 145 and 178 each coordinate FMN. Residue Asn-178 participates in substrate binding. The active-site Nucleophile is Ser-181. Asn-183 is a binding site for substrate. 2 residues coordinate FMN: Lys-214 and Thr-242. 243 to 244 (NT) lines the substrate pocket. FMN-binding positions include Gly-262, Gly-291, and 312 to 313 (YS).

It belongs to the dihydroorotate dehydrogenase family. Type 2 subfamily. In terms of assembly, monomer. FMN is required as a cofactor.

It is found in the cell membrane. It catalyses the reaction (S)-dihydroorotate + a quinone = orotate + a quinol. It functions in the pathway pyrimidine metabolism; UMP biosynthesis via de novo pathway; orotate from (S)-dihydroorotate (quinone route): step 1/1. Functionally, catalyzes the conversion of dihydroorotate to orotate with quinone as electron acceptor. The polypeptide is Dihydroorotate dehydrogenase (quinone) (Helicobacter pylori (strain Shi470)).